A 21-amino-acid chain; its full sequence is MKAPSGAFLLGVYSMDTHILR.

The sequence is that of Protein YnfR from Escherichia coli (strain K12).